A 420-amino-acid polypeptide reads, in one-letter code: UDP-N-acetylglucosamine 1-carboxyvinyltransferase (420 aa).

22 to 23 (KN) serves as a coordination point for phosphoenolpyruvate. UDP-N-acetyl-alpha-D-glucosamine is bound at residue R95. C119 acts as the Proton donor in catalysis. Position 119 is a 2-(S-cysteinyl)pyruvic acid O-phosphothioketal (C119). Residues 124 to 128 (RPIDQ), D307, and I329 contribute to the UDP-N-acetyl-alpha-D-glucosamine site.

It belongs to the EPSP synthase family. MurA subfamily.

The protein localises to the cytoplasm. It catalyses the reaction phosphoenolpyruvate + UDP-N-acetyl-alpha-D-glucosamine = UDP-N-acetyl-3-O-(1-carboxyvinyl)-alpha-D-glucosamine + phosphate. The protein operates within cell wall biogenesis; peptidoglycan biosynthesis. Its function is as follows. Cell wall formation. Adds enolpyruvyl to UDP-N-acetylglucosamine. The chain is UDP-N-acetylglucosamine 1-carboxyvinyltransferase from Myxococcus xanthus (strain DK1622).